Consider the following 318-residue polypeptide: Homeobox-leucine zipper protein ATHB-4 (318 aa).

Disordered stretches follow at residues 1 to 23 and 128 to 165; these read MGER…KEPS and ARGG…RKKL. The segment covering 8–17 has biased composition (low complexity); that stretch reads LGLSLSLGNS. A compositionally biased stretch (basic and acidic residues) spans 128-140; the sequence is ARGGDENEAERAS. The homeobox DNA-binding region spans 160 to 219; that stretch reads GSRKKLRLSKDQALVLEETFKEHSTLNPKQKLALAKQLNLRARQVEVWFQNRRARTKLKQ. Positions 227–248 are leucine-zipper; it reads LKRCCDNLTEENRRLQKEVSEL.

Belongs to the HD-ZIP homeobox family. Class II subfamily.

It is found in the nucleus. Its function is as follows. Probable transcription factor. This Arabidopsis thaliana (Mouse-ear cress) protein is Homeobox-leucine zipper protein ATHB-4 (ATHB-4).